A 303-amino-acid chain; its full sequence is D-alanine--D-alanine ligase (303 aa).

Positions 99 to 293 (TYRFLKDIVE…FEELVEIILK (195 aa)) constitute an ATP-grasp domain. Residue 125–176 (GYPCVVKPRREGSSIGVFICESDEEFQHALKEDLPRYGSVIVQKYIPGREMT) participates in ATP binding. Mg(2+) contacts are provided by Asp248, Glu260, and Asn262.

It belongs to the D-alanine--D-alanine ligase family. The cofactor is Mg(2+). It depends on Mn(2+) as a cofactor.

The protein localises to the cytoplasm. It carries out the reaction 2 D-alanine + ATP = D-alanyl-D-alanine + ADP + phosphate + H(+). It functions in the pathway cell wall biogenesis; peptidoglycan biosynthesis. Functionally, cell wall formation. In Thermotoga petrophila (strain ATCC BAA-488 / DSM 13995 / JCM 10881 / RKU-1), this protein is D-alanine--D-alanine ligase.